The chain runs to 194 residues: Orotate phosphoribosyltransferase (194 aa).

E117–S125 serves as a coordination point for 5-phospho-alpha-D-ribose 1-diphosphate. Orotate contacts are provided by T121 and R149.

It belongs to the purine/pyrimidine phosphoribosyltransferase family. PyrE subfamily. In terms of assembly, homodimer. Requires Mg(2+) as cofactor.

It carries out the reaction orotidine 5'-phosphate + diphosphate = orotate + 5-phospho-alpha-D-ribose 1-diphosphate. It participates in pyrimidine metabolism; UMP biosynthesis via de novo pathway; UMP from orotate: step 1/2. Catalyzes the transfer of a ribosyl phosphate group from 5-phosphoribose 1-diphosphate to orotate, leading to the formation of orotidine monophosphate (OMP). This is Orotate phosphoribosyltransferase from Novosphingobium aromaticivorans (strain ATCC 700278 / DSM 12444 / CCUG 56034 / CIP 105152 / NBRC 16084 / F199).